The chain runs to 281 residues: MEMO1 family protein APE_1771 (281 aa).

The protein belongs to the MEMO1 family.

The polypeptide is MEMO1 family protein APE_1771 (Aeropyrum pernix (strain ATCC 700893 / DSM 11879 / JCM 9820 / NBRC 100138 / K1)).